The primary structure comprises 341 residues: Glycerol-3-phosphate dehydrogenase [NAD(P)+] (341 aa).

NADPH is bound by residues serine 17, tryptophan 18, arginine 37, and lysine 112. Lysine 112 and glycine 140 together coordinate sn-glycerol 3-phosphate. Alanine 144 is an NADPH binding site. Sn-glycerol 3-phosphate contacts are provided by lysine 195, aspartate 248, serine 258, arginine 259, and asparagine 260. Lysine 195 serves as the catalytic Proton acceptor. Position 259 (arginine 259) interacts with NADPH. Positions 283 and 285 each coordinate NADPH.

The protein belongs to the NAD-dependent glycerol-3-phosphate dehydrogenase family.

The protein localises to the cytoplasm. It catalyses the reaction sn-glycerol 3-phosphate + NAD(+) = dihydroxyacetone phosphate + NADH + H(+). It carries out the reaction sn-glycerol 3-phosphate + NADP(+) = dihydroxyacetone phosphate + NADPH + H(+). It participates in membrane lipid metabolism; glycerophospholipid metabolism. In terms of biological role, catalyzes the reduction of the glycolytic intermediate dihydroxyacetone phosphate (DHAP) to sn-glycerol 3-phosphate (G3P), the key precursor for phospholipid synthesis. This Mycobacterium avium (strain 104) protein is Glycerol-3-phosphate dehydrogenase [NAD(P)+].